Reading from the N-terminus, the 110-residue chain is Iron-sulfur cluster assembly protein CyaY (110 aa).

This sequence belongs to the frataxin family.

Its function is as follows. Involved in iron-sulfur (Fe-S) cluster assembly. May act as a regulator of Fe-S biogenesis. The chain is Iron-sulfur cluster assembly protein CyaY from Pseudomonas entomophila (strain L48).